The primary structure comprises 88 residues: Apolipoprotein C-I (88 aa).

Positions 1–26 (MRLFLSLPVLVVVLAMVLEGPAPTQA) are cleaved as a signal peptide.

It belongs to the apolipoprotein C1 family.

It localises to the secreted. Inhibitor of lipoprotein binding to the low density lipoprotein (LDL) receptor, LDL receptor-related protein, and very low density lipoprotein (VLDL) receptor. Associates with high density lipoproteins (HDL) and the triacylglycerol-rich lipoproteins in the plasma and makes up about 10% of the protein of the VLDL and 2% of that of HDL. Appears to interfere directly with fatty acid uptake and is also the major plasma inhibitor of cholesteryl ester transfer protein (CETP). Binds free fatty acids and reduces their intracellular esterification. Modulates the interaction of APOE with beta-migrating VLDL and inhibits binding of beta-VLDL to the LDL receptor-related protein. This Leptonychotes weddellii (Weddell seal) protein is Apolipoprotein C-I (APOC1).